The sequence spans 979 residues: Peptidyl-glycine alpha-amidating monooxygenase (979 aa).

An N-terminal signal peptide occupies residues 1-24 (MAGRARSRLLLLLGLLALQSSCLA). The peptidylglycine alpha-hydroxylating monooxygenase stretch occupies residues 1 to 497 (MAGRARSRLL…EGPWEPELAG (497 aa)). Positions 25–34 (FRSPLSVFKR) are excised as a propeptide. Residues 35–869 (FKETTRSFSN…KKLIKDPGSG (835 aa)) lie on the Intragranular side of the membrane. Cystine bridges form between cysteine 46–cysteine 185, cysteine 80–cysteine 125, cysteine 113–cysteine 130, cysteine 226–cysteine 333, and cysteine 292–cysteine 314. Cu(2+) is bound by residues histidine 106 and histidine 107. Histidine 171, histidine 241, histidine 243, and methionine 313 together coordinate Cu(2+). A peptidyl-alpha-hydroxyglycine alpha-amidating lyase region spans residues 498 to 823 (DFHVEEALEW…SRLEVEHRSV (326 aa)). NHL repeat units lie at residues 501 to 544 (VEEA…NSFD), 570 to 611 (AEIL…LEPR), 620 to 665 (LGRS…FSPS), and 673 to 717 (GEES…FKTD). A Ca(2+)-binding site is contributed by valine 520. Arginine 533 is an a protein binding site. A Zn(2+)-binding site is contributed by histidine 585. Leucine 587 lines the Ca(2+) pocket. A disulfide bond links cysteine 634 and cysteine 655. A protein is bound at residue tyrosine 654. Histidine 690 serves as a coordination point for Zn(2+). A disulfide bridge links cysteine 702 with cysteine 713. Residue arginine 706 coordinates a protein. Residue asparagine 765 is glycosylated (N-linked (GlcNAc...) asparagine). Residues 769 to 812 (GEIIDVFKPVRKHFDMPHDIVASEDGTVYIGDAHTNTVWKFTLT) form an NHL 5 repeat. Histidine 786 is a Zn(2+) binding site. Ca(2+) is bound at residue aspartate 787. The helical transmembrane segment at 870 to 893 (VPVVLITTLLVIPVVVLLAIAMFI) threads the bilayer. Topologically, residues 894 to 979 (RWKKSRAFGD…APLPTPAPSS (86 aa)) are cytoplasmic. Phosphoserine occurs at positions 924, 925, 935, and 948. Residues 931 to 948 (NFFASRKGYSRKGFDRVS) form an interaction with RASSF9 region. Residues 943-979 (GFDRVSTEGSDQEKDEDDGSESEEEYSAPLPTPAPSS) are disordered. A Phosphothreonine modification is found at threonine 949. A Phosphoserine; by UHMK1 modification is found at serine 952. A compositionally biased stretch (acidic residues) spans 955–968 (EKDEDDGSESEEEY). Position 964 is a phosphoserine (serine 964).

It in the C-terminal section; belongs to the peptidyl-alpha-hydroxyglycine alpha-amidating lyase family. This sequence in the N-terminal section; belongs to the copper type II ascorbate-dependent monooxygenase family. Monomer. Interacts with RASSF9. Zn(2+) is required as a cofactor. It depends on Cu(2+) as a cofactor.

It is found in the cytoplasmic vesicle. The protein resides in the secretory vesicle membrane. It carries out the reaction a [peptide]-C-terminal glycine + 2 L-ascorbate + O2 = a [peptide]-C-terminal (2S)-2-hydroxyglycine + 2 monodehydro-L-ascorbate radical + H2O. It catalyses the reaction a [peptide]-C-terminal (2S)-2-hydroxyglycine = a [peptide]-C-terminal amide + glyoxylate. The catalysed reaction is N-dodecanoylglycine + 2 L-ascorbate + O2 = N-dodecanoyl-(2S)-hydroxyglycine + 2 monodehydro-L-ascorbate radical + H2O. The enzyme catalyses N-dodecanoyl-(2S)-hydroxyglycine = dodecanamide + glyoxylate. It carries out the reaction N-(9Z,12Z,15Z)-octadecatrienoylglycine + 2 L-ascorbate + O2 = N-(9Z,12Z,15Z)-octadecatrienoyl-(2S)-hydroxyglycine + 2 monodehydro-L-ascorbate radical + H2O. It catalyses the reaction N-(9Z,12Z,15Z)-octadecatrienoyl-(2S)-hydroxyglycine = (9Z,12Z,15Z)-octadecatrienamide + glyoxylate. The catalysed reaction is N-(9Z-octadecenoyl)glycine + 2 L-ascorbate + O2 = N-(9Z-octadecenoyl)-(2S)-hydroxyglycine + 2 monodehydro-L-ascorbate radical + H2O. The enzyme catalyses N-(9Z-octadecenoyl)-(2S)-hydroxyglycine = (9Z)-octadecenamide + glyoxylate. It carries out the reaction N-tetradecanoylglycine + 2 L-ascorbate + O2 = N-tetradecanoyl-(2S)-hydroxyglycine + 2 monodehydro-L-ascorbate radical + H2O. It catalyses the reaction N-tetradecanoyl-(2S)-hydroxyglycine = tetradecamide + glyoxylate. The catalysed reaction is N-decanoylglycine + 2 L-ascorbate + O2 = N-decanoyl-(2S)-hydroxyglycine + 2 monodehydro-L-ascorbate radical + H2O. The enzyme catalyses N-decanoyl-(2S)-hydroxyglycine = decanamide + glyoxylate. It carries out the reaction N-octanoylglycine + 2 L-ascorbate + O2 = N-octanoyl-(2S)-hydroxyglycine + 2 monodehydro-L-ascorbate radical + H2O. It catalyses the reaction N-octanoyl-(2S)-hydroxyglycine = octanamide + glyoxylate. With respect to regulation, PAM activity is inhibited by EDTA, phenylglyoxal and diethyl pyrocarbonate. PAL activity is stimulated by cadmium and inhibited by mercury. Bifunctional enzyme that catalyzes amidation of the C-terminus of proteins. Alpha-amidation is present at the C-terminus of many endocrine hormones and neuropeptides and is required for their activity. C-terminal amidation also takes place in response to protein fragmentation triggered by oxidative stress, promoting degradation of amidated protein fragments by the proteasome. Alpha-amidation involves two sequential reactions, both of which are catalyzed by separate catalytic domains of the enzyme. The first step, catalyzed by peptidyl alpha-hydroxylating monooxygenase (PHM) domain, is the copper-, ascorbate-, and O2- dependent stereospecific hydroxylation (with S stereochemistry) at the alpha-carbon (C-alpha) of the C-terminal glycine of the peptidylglycine substrate. The second step, catalyzed by the peptidylglycine amidoglycolate lyase (PAL) domain, is the zinc-dependent cleavage of the N-C-alpha bond, producing the alpha-amidated peptide and glyoxylate. Similarly, catalyzes the two-step conversion of an N-fatty acylglycine to a primary fatty acid amide and glyoxylate. The sequence is that of Peptidyl-glycine alpha-amidating monooxygenase from Mus musculus (Mouse).